We begin with the raw amino-acid sequence, 1371 residues long: DNA-directed RNA polymerase subunit beta' (1371 aa).

Residues cysteine 71, cysteine 73, cysteine 86, and cysteine 89 each coordinate Zn(2+). Aspartate 461, aspartate 463, and aspartate 465 together coordinate Mg(2+). The Zn(2+) site is built by cysteine 803, cysteine 877, cysteine 884, and cysteine 887.

It belongs to the RNA polymerase beta' chain family. The RNAP catalytic core consists of 2 alpha, 1 beta, 1 beta' and 1 omega subunit. When a sigma factor is associated with the core the holoenzyme is formed, which can initiate transcription. It depends on Mg(2+) as a cofactor. Zn(2+) serves as cofactor.

The catalysed reaction is RNA(n) + a ribonucleoside 5'-triphosphate = RNA(n+1) + diphosphate. In terms of biological role, DNA-dependent RNA polymerase catalyzes the transcription of DNA into RNA using the four ribonucleoside triphosphates as substrates. The protein is DNA-directed RNA polymerase subunit beta' of Thermodesulfovibrio yellowstonii (strain ATCC 51303 / DSM 11347 / YP87).